Reading from the N-terminus, the 534-residue chain is GTPase Obg (534 aa).

The 158-residue stretch at 2–159 (ASFVDRVVLH…SDIVLELKSI (158 aa)) folds into the Obg domain. The disordered stretch occupies residues 63-82 (APHRHASNGGQGMGDWRGGK). Gly residues predominate over residues 71 to 82 (GGQGMGDWRGGK). Positions 160-343 (ADIALVGFPS…LSFAMAELVT (184 aa)) constitute an OBG-type G domain. GTP contacts are provided by residues 166-173 (GFPSAGKS), 191-195 (FTTLI), 212-215 (DVPG), 295-298 (NKID), and 324-326 (SAS). Residues Ser173 and Thr193 each coordinate Mg(2+). The OCT domain occupies 363 to 449 (PRAVNRKEFT…ENAVVFDWEP (87 aa)). The interval 456 to 534 (ELLSGPRGTD…AASTDDGDAL (79 aa)) is disordered. Basic and acidic residues-rich tracts occupy residues 464-504 (TDPR…ERKA) and 512-526 (SARRDREAHESREAA).

It belongs to the TRAFAC class OBG-HflX-like GTPase superfamily. OBG GTPase family. In terms of assembly, monomer. The cofactor is Mg(2+).

It is found in the cytoplasm. In terms of biological role, an essential GTPase which binds GTP, GDP and possibly (p)ppGpp with moderate affinity, with high nucleotide exchange rates and a fairly low GTP hydrolysis rate. Plays a role in control of the cell cycle, stress response, ribosome biogenesis and in those bacteria that undergo differentiation, in morphogenesis control. This is GTPase Obg from Renibacterium salmoninarum (strain ATCC 33209 / DSM 20767 / JCM 11484 / NBRC 15589 / NCIMB 2235).